Here is a 67-residue protein sequence, read N- to C-terminus: MLDPSIDSLMNKLDSKYTLVTVSARRAREMQIKKDQMIEHTISHKYVGKALEEIDAGLLSFEKEDRE.

Belongs to the RNA polymerase subunit omega family. In terms of assembly, RNAP is composed of a core of 2 alpha, a beta and a beta' subunit. The core is associated with a delta subunit, and at least one of epsilon or omega. When a sigma factor is associated with the core the holoenzyme is formed, which can initiate transcription.

It carries out the reaction RNA(n) + a ribonucleoside 5'-triphosphate = RNA(n+1) + diphosphate. Promotes RNA polymerase assembly. Latches the N- and C-terminal regions of the beta' subunit thereby facilitating its interaction with the beta and alpha subunits. In vitro reconstitution experiments this subunit is dispensible. This is DNA-directed RNA polymerase subunit omega (rpoZ) from Bacillus subtilis (strain 168).